Here is a 147-residue protein sequence, read N- to C-terminus: Hemoglobin subunit delta (147 aa).

Residues 3-147 (HLTPEEKAAV…VATALAHKYH (145 aa)) form the Globin domain. Positions 64 and 93 each coordinate heme b.

Belongs to the globin family. In terms of assembly, heterotetramer of two delta chains and two alpha chains. As to expression, red blood cells.

This is Hemoglobin subunit delta (HBD) from Ateles geoffroyi (Black-handed spider monkey).